We begin with the raw amino-acid sequence, 202 residues long: Endothelin-1 (202 aa).

The N-terminal stretch at 1–25 (MDYFPVIFSLLFVTFQGAPETAVLG) is a signal peptide. Positions 26–50 (AELSTGAENGVQSPPPSTPWRPRRS) are excised as a propeptide. 2 disulfides stabilise this stretch: C53–C67 and C55–C63. The propeptide occupies 74–202 (VNTPERVVPY…DQKLTHNRAH (129 aa)). The interval 110-124 (CQCAHQKDKKCWNFC) is endothelin-like.

The protein belongs to the endothelin/sarafotoxin family. In terms of tissue distribution, highest expression in the adult is in lung. Lower levels found in heart, kidney, brain and intestine. In the embryo, expressed in outer and inner pharyngeal arch surfaces. Also expressed in endothelium of dorsal aorta and arch arteries, and in epithelium of pharyngeal pouches.

The protein resides in the secreted. Functionally, endothelins are endothelium-derived vasoconstrictor peptides. Probable ligand for G-protein coupled receptors EDNRA and EDNRB which activates PTK2B, BCAR1, BCAR3 and, GTPases RAP1 and RHOA cascade in glomerular mesangial cells. Also binds the DEAR/FBXW7-AS1 receptor. Promotes mesenteric arterial wall remodeling via activation of ROCK signaling and subsequent colocalization of NFATC3 with F-actin filaments. NFATC3 then translocates to the nucleus where it subsequently promotes the transcription of the smooth muscle hypertrophy and differentiation marker ACTA2. This is Endothelin-1 (Edn1) from Mus musculus (Mouse).